The primary structure comprises 172 residues: Envelope protein UL45 (172 aa).

Over 1–27 the chain is Intravirion; the sequence is MPLRASEHAYRPLGPGTPPMRARLPAA. The helical; Signal-anchor for type II membrane protein transmembrane segment at 28-48 threads the bilayer; the sequence is AWVGVGTIIGGVVIIAALVLV. The Virion surface portion of the chain corresponds to 49–172; that stretch reads PSRASWALSP…TSTRNALGLP (124 aa).

It belongs to the herpesviridae HHV-1 UL45 family.

It is found in the virion membrane. Functionally, important virulence factor of HSV neurotropism. Seems to be required for glycoprotein B-induced fusion. Dispensable for growth in vitro. The sequence is that of Envelope protein UL45 from Human herpesvirus 1 (strain 17) (HHV-1).